The following is a 318-amino-acid chain: NADH-ubiquinone oxidoreductase chain 1 (318 aa).

The next 8 membrane-spanning stretches (helical) occupy residues 2-22, 69-89, 102-122, 146-166, 171-191, 222-242, 253-273, and 294-314; these read FLIN…FLTL, FLFT…WAPL, LLFI…SGWA, MTTI…TAFA, HLWL…STLA, LFFM…VILF, EIST…FLWV, and LPLT…LACI.

The protein belongs to the complex I subunit 1 family. In terms of assembly, core subunit of respiratory chain NADH dehydrogenase (Complex I) which is composed of 45 different subunits.

It is found in the mitochondrion inner membrane. The enzyme catalyses a ubiquinone + NADH + 5 H(+)(in) = a ubiquinol + NAD(+) + 4 H(+)(out). Its function is as follows. Core subunit of the mitochondrial membrane respiratory chain NADH dehydrogenase (Complex I) which catalyzes electron transfer from NADH through the respiratory chain, using ubiquinone as an electron acceptor. Essential for the catalytic activity and assembly of complex I. The sequence is that of NADH-ubiquinone oxidoreductase chain 1 (MT-ND1) from Elephas maximus (Indian elephant).